Here is a 103-residue protein sequence, read N- to C-terminus: Large ribosomal subunit protein bL21 (103 aa).

Belongs to the bacterial ribosomal protein bL21 family. Part of the 50S ribosomal subunit. Contacts protein L20.

Functionally, this protein binds to 23S rRNA in the presence of protein L20. This is Large ribosomal subunit protein bL21 from Ruminiclostridium cellulolyticum (strain ATCC 35319 / DSM 5812 / JCM 6584 / H10) (Clostridium cellulolyticum).